Reading from the N-terminus, the 176-residue chain is BPTI/Kunitz inhibitor domain-containing protein C02F12.5 (176 aa).

Positions 1 to 17 (MLFFTLLIQLFLVPVLC) are cleaved as a signal peptide. One can recognise a BPTI/Kunitz inhibitor domain in the interval 21–74 (CSSELKFGTACSENKTSTKWYYDSKLLFCYPYKYLGCGEGSNSFESNENCLESC). Disulfide bonds link cysteine 21–cysteine 74, cysteine 31–cysteine 57, and cysteine 49–cysteine 70. The N-linked (GlcNAc...) asparagine glycan is linked to asparagine 34.

This chain is BPTI/Kunitz inhibitor domain-containing protein C02F12.5, found in Caenorhabditis elegans.